The chain runs to 448 residues: Antilisterial bacteriocin subtilosin biosynthesis protein AlbA (448 aa).

Positions 115 to 329 (FPMPLHATFE…EQHVIDEFKD (215 aa)) constitute a Radical SAM core domain. Positions 129, 133, 136, 408, 414, and 417 each coordinate [4Fe-4S] cluster.

[4Fe-4S] cluster is required as a cofactor.

The protein resides in the cytoplasm. Catalyzes the formation of 3 thioether bonds during production of the sactipeptide subtilosin from SboA. In vitro the thioether bonds cannot be made in the absence of the SboA propeptide, suggesting this is the first reaction in subtilosin maturation. In vitro, in the absence of a second substrate, cleaves S-adenosyl-L-methionine into Met and 5'-dA. The sequence is that of Antilisterial bacteriocin subtilosin biosynthesis protein AlbA (albA) from Bacillus subtilis (strain 168).